The following is a 419-amino-acid chain: Putative L-glutamine:3-amino-2,3-dideoxy-scyllo-inosose aminotransferase (419 aa).

Lysine 199 is subject to N6-(pyridoxal phosphate)lysine.

It belongs to the DegT/DnrJ/EryC1 family. L-glutamine:2-deoxy-scyllo-inosose/scyllo-inosose aminotransferase subfamily. It depends on pyridoxal 5'-phosphate as a cofactor.

It catalyses the reaction 3-amino-2,3-dideoxy-scyllo-inosose + L-glutamine = 2-deoxystreptamine + 2-oxoglutaramate. It participates in metabolic intermediate biosynthesis; 2-deoxystreptamine biosynthesis; 2-deoxystreptamine from D-glucose 6-phosphate: step 4/4. It functions in the pathway antibiotic biosynthesis; kanamycin biosynthesis. Functionally, catalyzes the transamination of 3-amino-2,3-dideoxy-scyllo-inosose (amino-DOI) into 2-deoxystreptamine (DOS). This Streptomyces kanamyceticus protein is Putative L-glutamine:3-amino-2,3-dideoxy-scyllo-inosose aminotransferase (kanD).